A 365-amino-acid chain; its full sequence is 3,4-dihydroxy-2-butanone 4-phosphate synthase (365 aa).

The segment at 1–201 is DHBP synthase; sequence MALNTIDELI…IADLIHYRLI (201 aa). D-ribulose 5-phosphate contacts are provided by residues 27 to 28, Asp32, 140 to 144, and Glu164; these read RE and RAGHT. Glu28 lines the Mg(2+) pocket. A Mg(2+)-binding site is contributed by His143. The interval 202 to 365 is GTP cyclohydrolase II-like; that stretch reads HERTVERIAE…LEVVEYLPAE (164 aa).

This sequence in the N-terminal section; belongs to the DHBP synthase family. In the C-terminal section; belongs to the GTP cyclohydrolase II family. It depends on Mg(2+) as a cofactor. Mn(2+) is required as a cofactor.

It catalyses the reaction D-ribulose 5-phosphate = (2S)-2-hydroxy-3-oxobutyl phosphate + formate + H(+). It functions in the pathway cofactor biosynthesis; riboflavin biosynthesis; 2-hydroxy-3-oxobutyl phosphate from D-ribulose 5-phosphate: step 1/1. Its function is as follows. Catalyzes the conversion of D-ribulose 5-phosphate to formate and 3,4-dihydroxy-2-butanone 4-phosphate. This chain is 3,4-dihydroxy-2-butanone 4-phosphate synthase (ribB), found in Pseudomonas aeruginosa (strain ATCC 15692 / DSM 22644 / CIP 104116 / JCM 14847 / LMG 12228 / 1C / PRS 101 / PAO1).